The chain runs to 129 residues: Serum amyloid A protein (129 aa).

A signal peptide spans 1–18; that stretch reads MKLFPGLLFCSLVLGVSG. Glutamine 19 carries the post-translational modification Pyrrolidone carboxylic acid. A disordered region spans residues 92-129; it reads GDSGHGAEDSKADQAANEWGRSGKDPNHFRPAGLPDKY. Residues 112–129 constitute a propeptide, often cleaved during amyloidogenesis; it reads RSGKDPNHFRPAGLPDKY.

This sequence belongs to the SAA family. Post-translationally, this protein is the precursor of amyloid protein A, which is formed by the removal of residues from the C-terminal end. Expressed by the liver; secreted in plasma.

The protein resides in the secreted. Functionally, major acute phase reactant. Apolipoprotein of the HDL complex. The sequence is that of Serum amyloid A protein (SAA1) from Canis lupus familiaris (Dog).